The following is a 312-amino-acid chain: MGSFEDRKATGTVFNIQKYSVHDGPGIRTIVFLKGCPLSCKWCSNPESQASHPQVAYNKGRCIGCHRCIKACEHDAITVNEDGTLSLDRGKCDVCKTLDCAHACPAQGMIIYGENKTVDQILKEVEKDALFYARSGGGMTLSGGEPLMHADIALPLLREARHRRIKTAIETCGCIPWDTLKEAAPYLNYVLFDVKQMDSEKHREGVGVGNELILSNLKKLLTEFPNLHVQVRTPIIPGFNDNDEFAYALGEFLKGYENVGYEALPYHRLGTQKYDFLSREYAMGDVSLPDGVAQRIQRIVDETRGAVTEEKK.

Residues 22–309 (HDGPGIRTIV…VDETRGAVTE (288 aa)) form the Radical SAM core domain. Positions 36, 40, 43, 62, 65, 68, 72, 92, 95, 100, and 104 each coordinate [4Fe-4S] cluster. 42–44 (WCS) contributes to the S-adenosyl-L-methionine binding site. 4Fe-4S ferredoxin-type domains are found at residues 53-82 (PQVA…VNED) and 83-115 (GTLS…YGEN). S-adenosyl-L-methionine is bound by residues G144, 193–195 (DVK), and H267.

The protein belongs to the organic radical-activating enzymes family. As to quaternary structure, monomer. The cofactor is [4Fe-4S] cluster.

The catalysed reaction is glycyl-[protein] + reduced [flavodoxin] + S-adenosyl-L-methionine = glycin-2-yl radical-[protein] + semiquinone [flavodoxin] + 5'-deoxyadenosine + L-methionine + H(+). It functions in the pathway organosulfur degradation; alkanesulfonate degradation. Involved in an anaerobic respiration pathway that converts the sulfonate taurine (2-aminoethanesulfonate) to ammonia, acetate and sulfide. Catalyzes activation of the isethionate sulfite-lyase IslA under anaerobic conditions by generation of an organic free radical on a glycine residue, via a homolytic cleavage of S-adenosyl-L-methionine (SAM). The chain is Isethionate sulfite-lyase activating enzyme from Bilophila wadsworthia (strain 3_1_6).